Consider the following 209-residue polypeptide: ATP-dependent Clp protease proteolytic subunit (209 aa).

Catalysis depends on S106, which acts as the Nucleophile. Residue H131 is part of the active site.

Belongs to the peptidase S14 family. In terms of assembly, fourteen ClpP subunits assemble into 2 heptameric rings which stack back to back to give a disk-like structure with a central cavity, resembling the structure of eukaryotic proteasomes.

It is found in the cytoplasm. The catalysed reaction is Hydrolysis of proteins to small peptides in the presence of ATP and magnesium. alpha-casein is the usual test substrate. In the absence of ATP, only oligopeptides shorter than five residues are hydrolyzed (such as succinyl-Leu-Tyr-|-NHMec, and Leu-Tyr-Leu-|-Tyr-Trp, in which cleavage of the -Tyr-|-Leu- and -Tyr-|-Trp bonds also occurs).. Cleaves peptides in various proteins in a process that requires ATP hydrolysis. Has a chymotrypsin-like activity. Plays a major role in the degradation of misfolded proteins. In Brucella canis (strain ATCC 23365 / NCTC 10854 / RM-666), this protein is ATP-dependent Clp protease proteolytic subunit.